A 593-amino-acid polypeptide reads, in one-letter code: Probable E3 ubiquitin-protein ligase ARI2 (593 aa).

Positions Ser120 to Gln334 are TRIAD supradomain. Positions 124, 127, 141, 143, 146, 149, 168, 173, 215, 221, 237, 239, 244, 247, 252, 257, 284, and 287 each coordinate Zn(2+). The RING-type 1 zinc finger occupies Cys124–Cys173. The IBR-type zinc finger occupies Glu195–Cys257. The RING-type 2; atypical zinc-finger motif lies at Cys284 to Cys312. Cys297 is an active-site residue. Zn(2+)-binding residues include Cys302, Cys304, Cys309, Cys312, His320, and Cys330.

It belongs to the RBR family. Ariadne subfamily. Requires Zn(2+) as cofactor. Ubiquitous.

It catalyses the reaction [E2 ubiquitin-conjugating enzyme]-S-ubiquitinyl-L-cysteine + [acceptor protein]-L-lysine = [E2 ubiquitin-conjugating enzyme]-L-cysteine + [acceptor protein]-N(6)-ubiquitinyl-L-lysine.. It participates in protein modification; protein ubiquitination. Functionally, might act as an E3 ubiquitin-protein ligase, or as part of E3 complex, which accepts ubiquitin from specific E2 ubiquitin-conjugating enzymes and then transfers it to substrates. The protein is Probable E3 ubiquitin-protein ligase ARI2 (ARI2) of Arabidopsis thaliana (Mouse-ear cress).